Reading from the N-terminus, the 246-residue chain is Major prion protein (246 aa).

An N-terminal signal peptide occupies residues methionine 1 to cysteine 15. An interaction with GRB2, ERI3 and SYN1 region spans residues lysine 16–serine 223. A disordered region spans residues arginine 18–methionine 102. 5 tandem repeats follow at residues proline 44–glutamine 52, proline 53–glutamine 60, proline 61–glutamine 68, proline 69–glutamine 76, and proline 77–glutamine 84. Positions proline 44–glutamine 84 are 5 X 8 AA tandem repeats of P-H-G-G-G-W-G-Q. Gly residues predominate over residues glutamine 45–threonine 88. Residues histidine 54, glycine 55, glycine 56, histidine 62, glycine 63, glycine 64, histidine 70, glycine 71, glycine 72, histidine 78, glycine 79, and glycine 80 each contribute to the Cu(2+) site. Residues glutamine 91–methionine 102 show a composition bias toward basic residues. An intrachain disulfide couples cysteine 172 to cysteine 207. Asparagine 174 and asparagine 190 each carry an N-linked (GlcNAc...) asparagine glycan. A lipid anchor (GPI-anchor amidated serine) is attached at serine 223. A propeptide spans serine 224–glycine 246 (removed in mature form).

It belongs to the prion family. In terms of assembly, monomer and homodimer. Has a tendency to aggregate into amyloid fibrils containing a cross-beta spine, formed by a steric zipper of superposed beta-strands. Soluble oligomers may represent an intermediate stage on the path to fibril formation. Copper binding may promote oligomerization. Interacts with GRB2, APP, ERI3/PRNPIP and SYN1. Mislocalized cytosolically exposed PrP interacts with MGRN1; this interaction alters MGRN1 subcellular location and causes lysosomal enlargement. Interacts with KIAA1191.

The protein localises to the cell membrane. It localises to the golgi apparatus. Its function is as follows. Its primary physiological function is unclear. Has cytoprotective activity against internal or environmental stresses. May play a role in neuronal development and synaptic plasticity. May be required for neuronal myelin sheath maintenance. May play a role in iron uptake and iron homeostasis. Soluble oligomers are toxic to cultured neuroblastoma cells and induce apoptosis (in vitro). Association with GPC1 (via its heparan sulfate chains) targets PRNP to lipid rafts. Also provides Cu(2+) or Zn(2+) for the ascorbate-mediated GPC1 deaminase degradation of its heparan sulfate side chains. The polypeptide is Major prion protein (PRNP) (Cercopithecus mona (Mona monkey)).